A 283-amino-acid chain; its full sequence is Pyridoxine/pyridoxal/pyridoxamine kinase (283 aa).

2 residues coordinate substrate: Ser-23 and His-59. Asp-125 serves as a coordination point for ATP. Position 136 (Tyr-136) interacts with Mg(2+). ATP is bound by residues Thr-157, Glu-162, Thr-195, 222–225 (HAHV), and Thr-232. Glu-162 contributes to the Mg(2+) binding site. Position 234 (Asp-234) interacts with substrate.

It belongs to the pyridoxine kinase family. PdxK subfamily. In terms of assembly, homodimer. Mg(2+) serves as cofactor.

It catalyses the reaction pyridoxal + ATP = pyridoxal 5'-phosphate + ADP + H(+). The catalysed reaction is pyridoxine + ATP = pyridoxine 5'-phosphate + ADP + H(+). It carries out the reaction pyridoxamine + ATP = pyridoxamine 5'-phosphate + ADP + H(+). The protein operates within cofactor metabolism; pyridoxal 5'-phosphate salvage; pyridoxal 5'-phosphate from pyridoxal: step 1/1. It functions in the pathway cofactor metabolism; pyridoxal 5'-phosphate salvage; pyridoxine 5'-phosphate from pyridoxine: step 1/1. It participates in cofactor metabolism; pyridoxal 5'-phosphate salvage; pyridoxamine 5'-phosphate from pyridoxamine: step 1/1. Its function is as follows. B6-vitamer kinase involved in the salvage pathway of pyridoxal 5'-phosphate (PLP). Catalyzes the phosphorylation of pyridoxine (PN), pyridoxal (PL), and pyridoxamine (PM), forming their respective 5'-phosphorylated esters, i.e. PNP, PLP and PMP. The sequence is that of Pyridoxine/pyridoxal/pyridoxamine kinase from Bordetella bronchiseptica (strain ATCC BAA-588 / NCTC 13252 / RB50) (Alcaligenes bronchisepticus).